Here is a 323-residue protein sequence, read N- to C-terminus: Transcription factor MYB108 (323 aa).

HTH myb-type domains are found at residues 16–68 (EMDL…LNYL) and 69–123 (RPDV…QKHA). 2 DNA-binding regions (H-T-H motif) span residues 44–68 (WNSL…LNYL) and 96–119 (WSKI…RTRV).

As to quaternary structure, interacts with BOI, but not with BRG1. In terms of processing, ubiquitinated in vitro by BOI. As to expression, expressed specifically in flowers. Restricted to anthers in maturing flowers. Strongest expression in the vascular and connective tissue where the anther attaches to the filament. Not detected in pollen.

The protein resides in the nucleus. Its function is as follows. Transcription factor contributing to the regulation of stamen maturation and male fertility in response to jasmonate signaling. Required for correct timing of anther dehiscence. Acts as a negative regulator of abscisic acid-induced cell death. Not involved in the regulation of BOI. Regulated by MYB21 and at a lower level by MYB24. Negatively regulated by the proteasome in an SCF(COI1) E3 ubiquitin-protein ligase complex-dependent manner. This is Transcription factor MYB108 (MYB108) from Arabidopsis thaliana (Mouse-ear cress).